Consider the following 251-residue polypeptide: Esterase mlcF (251 aa).

Residues serine 126, aspartate 193, and histidine 221 each act as charge relay system in the active site.

Belongs to the LovG family.

The enzyme catalyses dihydro-ML-236C-[compactin nonaketide synthase] + H2O = holo-[compactin nonaketide synthase] + dihydro-ML-236C carboxylate + H(+). It participates in polyketide biosynthesis. In terms of biological role, esterase; part of the gene cluster that mediates the biosynthesis of compactin, also known as mevastatin or ML-236B, and which acts as a potent competitive inhibitor of HMG-CoA reductase. Compactin biosynthesis is performed in two stages. The first stage is catalyzed by the nonaketide synthase mlcA, which belongs to type I polyketide synthases and catalyzes the iterative nine-step formation of the polyketide. This PKS stage is completed by the action of dehydrogenase mlcG, which catalyzes the NADPH-dependent reduction of the unsaturated tetra-, penta- and heptaketide intermediates that arise during the mlcA-mediated biosynthesis of the nonaketide chain and leads to dihydro-ML-236C carboxylate. Covalently bound dihydro-ML-236C carboxylate is released from mlcA by the mlcF esterase. Conversion of dihydro-ML-236C carboxylate into ML-236A carboxylate is subsequently performed with the participation of molecular oxygen and P450 monoogygenase mlcC. Finally, mlcH performs the conversion of ML-236A carboxylate to ML-236B/compactin carboxylate through the addition of the side-chain diketide moiety produced by the diketide synthase mlcB. The chain is Esterase mlcF from Penicillium citrinum.